The chain runs to 504 residues: Deoxyguanosinetriphosphate triphosphohydrolase (504 aa).

Residues 66–273 enclose the HD domain; it reads RLTHSLEVQQ…MEAADDISYC (208 aa).

It belongs to the dGTPase family. Type 1 subfamily. Homotetramer. It depends on Mg(2+) as a cofactor.

It carries out the reaction dGTP + H2O = 2'-deoxyguanosine + triphosphate + H(+). DGTPase preferentially hydrolyzes dGTP over the other canonical NTPs. This chain is Deoxyguanosinetriphosphate triphosphohydrolase, found in Klebsiella pneumoniae subsp. pneumoniae (strain ATCC 700721 / MGH 78578).